A 1304-amino-acid polypeptide reads, in one-letter code: Probable inactive serine/threonine-protein kinase fnkC (1304 aa).

Residues 33 to 402 enclose the Protein kinase domain; that stretch reads FEIIRILKKD…TNLLLTHKFI (370 aa). ATP contacts are provided by residues 39-47 and Lys68; that span reads LKKDEFSTT. Positions 208-277 are disordered; the sequence is KDNNNNNNNN…EAEGGGGGGE (70 aa). Residues 210 to 269 show a composition bias toward low complexity; the sequence is NNNNNNNNNNNNNNNNNNNNNNNNNNNNNNANNSNNNTLNNLSIVNNNSSSSSNDNSSEA. FNIP repeat units lie at residues 514-556, 710-753, 754-797, 798-841, and 900-943; these read HSKS…LGSD, FNQL…FGRC, FNQP…FGSQ, YNQP…FGES, and YNDI…FGCD. MATH domains are found at residues 1025–1154 and 1172–1291; these read QGSW…RIDA and NQAF…NVSI.

This sequence belongs to the protein kinase superfamily. STE Ser/Thr protein kinase family.

This chain is Probable inactive serine/threonine-protein kinase fnkC (fnkC), found in Dictyostelium discoideum (Social amoeba).